The primary structure comprises 70 residues: Gas vesicle protein A (70 aa).

The protein belongs to the gas vesicle GvpA family. In terms of assembly, the gas vesicle shell is 2 nm thick and consists of a single layer of this protein. It forms helical ribs nearly perpendicular to the long axis of the vesicle.

Its subcellular location is the gas vesicle shell. In terms of biological role, gas vesicles are hollow, gas filled proteinaceous nanostructures found in some microorganisms. During planktonic growth they allow positioning of the organism at a favorable depth for light or nutrient acquisition. GvpA forms the protein shell. This chain is Gas vesicle protein A, found in Bradyrhizobium sp. (strain ORS 278).